The primary structure comprises 212 residues: MERSDLPPDVVIRRLPLYARSLRYLLEEGVHSVSSQELGERINVTAAQIRKDLSYFGEFGKQGIGYDVEKLLQHIERILGLHHHWPVALVGIGLLGQAIARYEGFRTEGIEIVALFDSDPAKIGQKIGDLTIQDFAHVRRIIAEKQIKMAIIAVPAQQAQRVADVLVEAGIRAILSYAPMILQVPEDVWVRYIDPVAVLQSMTYYLAREQEH.

A DNA-binding region (H-T-H motif) is located at residues 17–56 (LYARSLRYLLEEGVHSVSSQELGERINVTAAQIRKDLSYF). Position 91–96 (91–96 (GIGLLG)) interacts with NAD(+).

Belongs to the transcriptional regulatory Rex family. In terms of assembly, homodimer.

Its subcellular location is the cytoplasm. Its function is as follows. Modulates transcription in response to changes in cellular NADH/NAD(+) redox state. This chain is Redox-sensing transcriptional repressor Rex, found in Chloroflexus aurantiacus (strain ATCC 29366 / DSM 635 / J-10-fl).